A 251-amino-acid chain; its full sequence is Triosephosphate isomerase (251 aa).

9 to 11 contributes to the substrate binding site; the sequence is NWK. His-95 serves as the catalytic Electrophile. The Proton acceptor role is filled by Glu-167. Residues Gly-173, Ser-213, and 234–235 each bind substrate; that span reads GG.

The protein belongs to the triosephosphate isomerase family. Homodimer.

It is found in the cytoplasm. The enzyme catalyses D-glyceraldehyde 3-phosphate = dihydroxyacetone phosphate. The protein operates within carbohydrate biosynthesis; gluconeogenesis. Its pathway is carbohydrate degradation; glycolysis; D-glyceraldehyde 3-phosphate from glycerone phosphate: step 1/1. Involved in the gluconeogenesis. Catalyzes stereospecifically the conversion of dihydroxyacetone phosphate (DHAP) to D-glyceraldehyde-3-phosphate (G3P). The sequence is that of Triosephosphate isomerase from Fusobacterium nucleatum subsp. nucleatum (strain ATCC 25586 / DSM 15643 / BCRC 10681 / CIP 101130 / JCM 8532 / KCTC 2640 / LMG 13131 / VPI 4355).